Reading from the N-terminus, the 1217-residue chain is Disease resistance protein RPS4 (1217 aa).

The region spanning 14–175 (PQHQVFINFR…EIVKAVKTAL (162 aa)) is the TIR domain. Glu-88 is a catalytic residue. The NB-ARC domain occupies 211–472 (EQRLKDLEEK…FRSQDKDYVE (262 aa)). 11 LRR repeats span residues 260-285 (HALI…LLGE), 436-459 (PNIV…AFLD), 614-636 (LKEV…DFNP), 637-659 (INLV…DKDT), 682-706 (AEKL…MKKM), 708-728 (MLAF…EMNL), 729-749 (ISLK…PLIS), 750-774 (DNIE…KLQR), 796-818 (LKAL…EIDI), 819-842 (SFLN…SVQY), and 861-887 (LSQL…NLQC). The tract at residues 1162 to 1195 (TEGVDGRVKKKKKTRMDNGRPKKKQRSGRDDNQT) is disordered. The Nuclear localization signal motif lies at 1170–1177 (KKKKKTRM).

Interacts with EDS1.

It localises to the nucleus. The catalysed reaction is NAD(+) + H2O = ADP-D-ribose + nicotinamide + H(+). Disease resistance (R) protein that specifically recognizes the AvrRps4 type III effector avirulence protein from Pseudomonas syringae. Resistance proteins guard the plant against pathogens that contain an appropriate avirulence protein via an indirect interaction with this avirulence protein. That triggers a defense system including the hypersensitive response, which restricts the pathogen growth. The combined presence of both regular and alternative RPS4 transcripts with truncated open reading frames (ORFs) is necessary for function. RPS4 function is regulated at multiple levels, including gene expression, alternative splicing, and protein stability. Acts as a disease resistance protein involved in resistance to fungal and bacterial pathogens, including R.solanacearum, P.syringae pv. tomato and C.higginsianum. In presence of RRS1, elicites an EDS1-dependent hypersensitive response. The polypeptide is Disease resistance protein RPS4 (Arabidopsis thaliana (Mouse-ear cress)).